Consider the following 329-residue polypeptide: Cytosolic arginine sensor for mTORC1 subunit 2 (329 aa).

2 consecutive ACT domains span residues 72–139 (ADAT…MHTL) and 262–322 (ELWK…NALQ).

It belongs to the GATS family. May form homodimers and heterodimers.

The protein localises to the cytoplasm. The protein resides in the cytosol. In terms of biological role, functions as a negative regulator of the TORC1 signaling pathway. The protein is Cytosolic arginine sensor for mTORC1 subunit 2 of Xenopus laevis (African clawed frog).